Reading from the N-terminus, the 327-residue chain is Methionine import ATP-binding protein MetN (327 aa).

The ABC transporter domain maps to Val-3–Leu-239. Gly-36 to Ser-43 is a binding site for ATP.

The protein belongs to the ABC transporter superfamily. Methionine importer (TC 3.A.1.24) family. In terms of assembly, the complex is composed of two ATP-binding proteins (MetN), two transmembrane proteins (MetI) and a solute-binding protein (MetQ).

It is found in the cell inner membrane. It carries out the reaction L-methionine(out) + ATP + H2O = L-methionine(in) + ADP + phosphate + H(+). The enzyme catalyses D-methionine(out) + ATP + H2O = D-methionine(in) + ADP + phosphate + H(+). Part of the ABC transporter complex MetNIQ involved in methionine import. Responsible for energy coupling to the transport system. The protein is Methionine import ATP-binding protein MetN of Helicobacter pylori (strain ATCC 700392 / 26695) (Campylobacter pylori).